The primary structure comprises 860 residues: Beta-glucosidase A (860 aa).

The signal sequence occupies residues 1-19; sequence MRFTLIEAVALTAVSLASA. Asparagine 61, asparagine 211, and asparagine 252 each carry an N-linked (GlcNAc...) asparagine glycan. Residue aspartate 280 is part of the active site. N-linked (GlcNAc...) asparagine glycosylation is found at asparagine 315, asparagine 322, asparagine 354, asparagine 387, asparagine 442, asparagine 523, asparagine 542, asparagine 564, asparagine 658, asparagine 690, and asparagine 712. Residues 719-753 form a disordered region; sequence SSGDASYGQDSSDYLPEGATDGSAQPILPAGGGPG.

It belongs to the glycosyl hydrolase 3 family.

It is found in the secreted. It carries out the reaction Hydrolysis of terminal, non-reducing beta-D-glucosyl residues with release of beta-D-glucose.. The protein operates within glycan metabolism; cellulose degradation. Functionally, beta-glucosidases are one of a number of cellulolytic enzymes involved in the degradation of cellulosic biomass. Catalyzes the last step releasing glucose from the inhibitory cellobiose. The polypeptide is Beta-glucosidase A (bglA) (Aspergillus kawachii (strain NBRC 4308) (White koji mold)).